The following is a 455-amino-acid chain: J protein JJJ2 (455 aa).

Residues 12–76 (TYYSILGVPT…QLRAEYDKKL (65 aa)) enclose the J domain. Residues 104–241 (RNSKPYEQQP…RKKSEKKATP (138 aa)) are disordered. Residues 133-144 (NSNPHNENSSNN) show a composition bias toward low complexity. The segment covering 156-168 (TLSKDSEDKHGTD) has biased composition (basic and acidic residues).

The protein resides in the cytoplasm. It is found in the nucleus. In Candida glabrata (strain ATCC 2001 / BCRC 20586 / JCM 3761 / NBRC 0622 / NRRL Y-65 / CBS 138) (Yeast), this protein is J protein JJJ2 (JJJ2).